A 472-amino-acid polypeptide reads, in one-letter code: D-2-hydroxyglutarate dehydrogenase (472 aa).

Residues 36–215 (WTPNPLAIAL…VEATLRLTDP (180 aa)) enclose the FAD-binding PCMH-type domain. Residues R323, T327, and K337 each coordinate (R)-2-hydroxyglutarate. The (R)-malate site is built by R323, T327, and K337. Zn(2+) contacts are provided by H372 and H379. Residue N381 participates in (R)-2-hydroxyglutarate binding. E418 contacts Zn(2+). H419 lines the (R)-2-hydroxyglutarate pocket. H419 is a (R)-malate binding site.

The protein belongs to the FAD-binding oxidoreductase/transferase type 4 family. In terms of assembly, homodimer. Requires FAD as cofactor.

It catalyses the reaction (R)-2-hydroxyglutarate + A = 2-oxoglutarate + AH2. It carries out the reaction (R)-malate + A = oxaloacetate + AH2. Its activity is regulated as follows. Activated by Zn(2+) ions. Its function is as follows. Catalyzes the dehydrogenation of (R)-2-hydroxyglutarate (D-2-hydroxyglutarate) to 2-oxoglutarate. Also has a low activity on D-malate in vitro. Is functionally tied to L-serine biosynthesis, via its coupling with the D-3-phosphoglycerate dehydrogenase SerA, encoded by the adjacent gene in the locus. Active in vitro with the artificial electron acceptor 2,6-dichlorophenolindophenol (DCPIP), but not with NAD, NADP, or cytochrome c. Also displays a very low oxidase activity in vitro on D-2-hydroxyglutarate and L-2-hydroxyglutarate with O2 as the electron acceptor, but this activity is most likely not physiological. The sequence is that of D-2-hydroxyglutarate dehydrogenase from Xanthomonas citri pv. viticola (strain LMG 965 / NCPPB 2475 / ICMP 3867 / CFBP 7660) (Xanthomonas campestris pv. viticola).